A 189-amino-acid polypeptide reads, in one-letter code: Nucleoside triphosphate pyrophosphatase (189 aa).

The active-site Proton acceptor is Asp-70.

Belongs to the Maf family. A divalent metal cation serves as cofactor.

It is found in the cytoplasm. It catalyses the reaction a ribonucleoside 5'-triphosphate + H2O = a ribonucleoside 5'-phosphate + diphosphate + H(+). The enzyme catalyses a 2'-deoxyribonucleoside 5'-triphosphate + H2O = a 2'-deoxyribonucleoside 5'-phosphate + diphosphate + H(+). Its function is as follows. Nucleoside triphosphate pyrophosphatase. May have a dual role in cell division arrest and in preventing the incorporation of modified nucleotides into cellular nucleic acids. This Xylella fastidiosa (strain 9a5c) protein is Nucleoside triphosphate pyrophosphatase.